A 709-amino-acid polypeptide reads, in one-letter code: Septu protein PtuA (709 aa).

Its function is as follows. Component of antiviral defense system Septu type II, composed of PtuA and PtuB. Expression of Septu type II in B.subtilis (strain BEST7003) confers resistance to phages SBSphiC and SpBeta. May be an ATPase. The protein is Septu protein PtuA of Bacillus mycoides (strain KBAB4) (Bacillus weihenstephanensis).